Consider the following 333-residue polypeptide: Regulator of rDNA transcription protein 5 (333 aa).

The disordered stretch occupies residues 1-22 (MFERQSNNPEPIEVSDNNPERE). The RRM 1 domain maps to 31 to 114 (TRIYISNLDY…RNLKVKLYVP (84 aa)). Disordered stretches follow at residues 123–185 (PAPK…DTVY) and 281–333 (GIAE…SVVA). Residues 125-137 (PKPRRLSKLRRSK) show a composition bias toward basic residues. Polar residues-rich tracts occupy residues 145 to 160 (NAAS…QERG) and 169 to 182 (AANN…TSDD). Residues 182–267 (DTVYCGYLPK…KKISVKPAYI (86 aa)) form the RRM 2 domain. Over residues 298-308 (GNGGQPAGPGV) the composition is skewed to gly residues. Residues 313 to 327 (SNPQQNCDNSNNVQP) show a composition bias toward polar residues.

The protein belongs to the RRT5 family.

In terms of biological role, may be involved in the modulation of rDNA transcription. The chain is Regulator of rDNA transcription protein 5 (RRT5) from Vanderwaltozyma polyspora (strain ATCC 22028 / DSM 70294 / BCRC 21397 / CBS 2163 / NBRC 10782 / NRRL Y-8283 / UCD 57-17) (Kluyveromyces polysporus).